Here is a 1641-residue protein sequence, read N- to C-terminus: Vitellogenin-1 (1641 aa).

A signal peptide spans 1–18 (MWYLAFLLIIGAYAADHA). Positions 19-790 (WETGNEYHYL…SQDTTVPKSS (772 aa)) constitute a Vitellogenin domain. A disulfide bond links Cys172 and Cys211. Residues 322–334 (LRQPSVSLNSMEA) show a composition bias toward polar residues. Residues 322-372 (LRQPSVSLNSMEARSSENSNEENRSDDDRSNFLSNSGEEREYLQSKPTLNE) are disordered. The segment covering 342-351 (EENRSDDDRS) has biased composition (basic and acidic residues). 13 N-linked (GlcNAc...) asparagine glycosylation sites follow: Asn344, Asn549, Asn566, Asn831, Asn875, Asn898, Asn1001, Asn1053, Asn1268, Asn1393, Asn1396, Asn1505, and Asn1523. Positions 1410–1597 (ESVCVLDKTH…TYAMTQESCQ (188 aa)) constitute a VWFD domain. Residues Cys1435 and Cys1596 are joined by a disulfide bond. A disordered region spans residues 1594–1641 (ESCQGPAPENKRKAEQSTCMSRSYRPSDVISDREAGRSSTKNRGWGYH).

As to expression, hemolymph.

The protein localises to the secreted. Functionally, precursor of the egg-yolk proteins that are sources of nutrients during embryonic development. This Solenopsis invicta (Red imported fire ant) protein is Vitellogenin-1.